Consider the following 158-residue polypeptide: NAD(P)H-quinone oxidoreductase subunit J, chloroplastic (158 aa).

The protein belongs to the complex I 30 kDa subunit family. As to quaternary structure, NDH is composed of at least 16 different subunits, 5 of which are encoded in the nucleus.

The protein localises to the plastid. It is found in the chloroplast thylakoid membrane. The enzyme catalyses a plastoquinone + NADH + (n+1) H(+)(in) = a plastoquinol + NAD(+) + n H(+)(out). It catalyses the reaction a plastoquinone + NADPH + (n+1) H(+)(in) = a plastoquinol + NADP(+) + n H(+)(out). In terms of biological role, NDH shuttles electrons from NAD(P)H:plastoquinone, via FMN and iron-sulfur (Fe-S) centers, to quinones in the photosynthetic chain and possibly in a chloroplast respiratory chain. The immediate electron acceptor for the enzyme in this species is believed to be plastoquinone. Couples the redox reaction to proton translocation, and thus conserves the redox energy in a proton gradient. This chain is NAD(P)H-quinone oxidoreductase subunit J, chloroplastic, found in Jasminum nudiflorum (Winter jasmine).